Here is a 364-residue protein sequence, read N- to C-terminus: DNA polymerase IV (364 aa).

In terms of domain architecture, UmuC spans 14-198 (IIHIDMDAFF…LPIEKFHGVG (185 aa)). 2 residues coordinate Mg(2+): Asp-18 and Asp-116. Residue Glu-117 is part of the active site.

Belongs to the DNA polymerase type-Y family. Monomer. Mg(2+) serves as cofactor.

The protein localises to the cytoplasm. The enzyme catalyses DNA(n) + a 2'-deoxyribonucleoside 5'-triphosphate = DNA(n+1) + diphosphate. Poorly processive, error-prone DNA polymerase involved in untargeted mutagenesis. Copies undamaged DNA at stalled replication forks, which arise in vivo from mismatched or misaligned primer ends. These misaligned primers can be extended by PolIV. Exhibits no 3'-5' exonuclease (proofreading) activity. May be involved in translesional synthesis, in conjunction with the beta clamp from PolIII. This Streptococcus pyogenes serotype M28 (strain MGAS6180) protein is DNA polymerase IV.